The sequence spans 289 residues: Diaminopimelate epimerase (289 aa).

The substrate site is built by Asn13, Gln47, and Asn67. The active-site Proton donor is the Cys76. Substrate contacts are provided by residues 77–78, Asn167, Asn200, and 218–219; these read GN and ER. Residue Cys227 is the Proton acceptor of the active site. 228–229 provides a ligand contact to substrate; the sequence is GT.

The protein belongs to the diaminopimelate epimerase family. As to quaternary structure, homodimer.

The protein resides in the cytoplasm. It catalyses the reaction (2S,6S)-2,6-diaminopimelate = meso-2,6-diaminopimelate. It participates in amino-acid biosynthesis; L-lysine biosynthesis via DAP pathway; DL-2,6-diaminopimelate from LL-2,6-diaminopimelate: step 1/1. In terms of biological role, catalyzes the stereoinversion of LL-2,6-diaminopimelate (L,L-DAP) to meso-diaminopimelate (meso-DAP), a precursor of L-lysine and an essential component of the bacterial peptidoglycan. The polypeptide is Diaminopimelate epimerase (Burkholderia thailandensis (strain ATCC 700388 / DSM 13276 / CCUG 48851 / CIP 106301 / E264)).